A 363-amino-acid chain; its full sequence is Aminomethyltransferase (363 aa).

It belongs to the GcvT family. As to quaternary structure, the glycine cleavage system is composed of four proteins: P, T, L and H.

The catalysed reaction is N(6)-[(R)-S(8)-aminomethyldihydrolipoyl]-L-lysyl-[protein] + (6S)-5,6,7,8-tetrahydrofolate = N(6)-[(R)-dihydrolipoyl]-L-lysyl-[protein] + (6R)-5,10-methylene-5,6,7,8-tetrahydrofolate + NH4(+). Its function is as follows. The glycine cleavage system catalyzes the degradation of glycine. The chain is Aminomethyltransferase from Staphylococcus epidermidis (strain ATCC 35984 / DSM 28319 / BCRC 17069 / CCUG 31568 / BM 3577 / RP62A).